We begin with the raw amino-acid sequence, 70 residues long: U2-agatoxin-Ao1a (70 aa).

Positions 1–20 are cleaved as a signal peptide; it reads MRAIISLFLISAMVFSMIQA. Positions 21–34 are excised as a propeptide; the sequence is VPEEEGLQLSEDER. 3 disulfides stabilise this stretch: Cys37/Cys53, Cys44/Cys58, and Cys52/Cys68. Leu69 carries the post-translational modification Leucine amide.

It belongs to the neurotoxin 01 (U2-agtx) family. As to expression, expressed by the venom gland.

The protein resides in the secreted. Its function is as follows. Insect active toxin causing rapid but reversible paralysis in crickets. No activity shown in mammals. Suppresses the excitatory postsynaptic potentials evoked in lobster neuromuscular synaptic preparations, possibly by blocking the presynaptic calcium channel. Induces instantaneous reversible paralysis when injected into crickets. Does not show effect on mammalian Cav2.1/CACNA1A, Cav2.2/CACNA1B and Cav2.3/CACNA1E. In Agelena orientalis (Funnel-web spider), this protein is U2-agatoxin-Ao1a.